We begin with the raw amino-acid sequence, 313 residues long: Formimidoylglutamase (313 aa).

The Mn(2+) site is built by H130, D155, H157, D159, D241, and D243.

It belongs to the arginase family. Requires Mn(2+) as cofactor.

It carries out the reaction N-formimidoyl-L-glutamate + H2O = formamide + L-glutamate. It participates in amino-acid degradation; L-histidine degradation into L-glutamate; L-glutamate from N-formimidoyl-L-glutamate (hydrolase route): step 1/1. In terms of biological role, catalyzes the conversion of N-formimidoyl-L-glutamate to L-glutamate and formamide. This is Formimidoylglutamase from Salmonella arizonae (strain ATCC BAA-731 / CDC346-86 / RSK2980).